The primary structure comprises 325 residues: Small ribosomal subunit biogenesis GTPase RsgA (325 aa).

The CP-type G domain occupies 80-241; sequence LSKQIHIIAS…IIDTPGIKGF (162 aa). GTP is bound by residues 129 to 132 and 183 to 191; these read NKID and GHSGVGKST. Positions 265, 270, 272, and 278 each coordinate Zn(2+).

The protein belongs to the TRAFAC class YlqF/YawG GTPase family. RsgA subfamily. In terms of assembly, monomer. Associates with 30S ribosomal subunit, binds 16S rRNA. The cofactor is Zn(2+).

It is found in the cytoplasm. One of several proteins that assist in the late maturation steps of the functional core of the 30S ribosomal subunit. Helps release RbfA from mature subunits. May play a role in the assembly of ribosomal proteins into the subunit. Circularly permuted GTPase that catalyzes slow GTP hydrolysis, GTPase activity is stimulated by the 30S ribosomal subunit. This is Small ribosomal subunit biogenesis GTPase RsgA from Flavobacterium johnsoniae (strain ATCC 17061 / DSM 2064 / JCM 8514 / BCRC 14874 / CCUG 350202 / NBRC 14942 / NCIMB 11054 / UW101) (Cytophaga johnsonae).